A 93-amino-acid polypeptide reads, in one-letter code: HIG1 domain family member 1A, mitochondrial (93 aa).

The 93-residue stretch at M1–P93 folds into the HIG1 domain. Residue S2 is modified to N-acetylserine. S8 is modified (phosphoserine). A run of 2 helical transmembrane segments spans residues E26–Y46 and L60–G80.

Associates with cytochrome c oxidase (COX, complex IV); proposed complex component. Also associates with respiratory chain supercomplexes.

Its subcellular location is the mitochondrion membrane. It is found in the mitochondrion inner membrane. Proposed subunit of cytochrome c oxidase (COX, complex IV), which is the terminal component of the mitochondrial respiratory chain that catalyzes the reduction of oxygen to water. May play a role in the assembly of respiratory supercomplexes. This is HIG1 domain family member 1A, mitochondrial (HIGD1A) from Homo sapiens (Human).